The following is a 458-amino-acid chain: MASEDKKSKREHIIHFEDTPSKSLDEVNGSVEVPHNAGFWKTLAAYTGPGILVAVGYMDPGNWITSIAGGASFKYSLLSVILISSLIAMLLQAMAARLGIVTGRDLAQMTRDHTSKAMGGFLWVITELAIMATDIAEIIGSAIALKLLFNMPLIVGIIITTADVLILLLLMRLGFRKIEAVVATLVLVILLVFAYEVILAQPNVPELLKGYLPHADIVTNKSMLYLSLGIVGATVMPHDLFLGSSISQTRKIDRTKHEEVKKAIKFSTIDSNLQLTMAFIVNSLLLILGAALFFGTSSSVGRFVDLFNALSNSQIVGAIASPMLSMLFAVALLASGQSSTITGTLAGQIIMEGFIHLKMPLWAQRLLTRLMSVTPVLIFAIYYHGNEAKIENLLTFSQVFLSIALPFAVIPLVLYTSDKKIMGEFANRAWVKWTAWFISGVLIILNLYLIAQTLGFVK.

A run of 11 helical transmembrane segments spans residues 38-58, 76-96, 119-139, 151-171, 180-200, 223-243, 275-295, 315-335, 370-390, 393-413, and 437-457; these read GFWKTLAAYTGPGILVAVGYM, SLLSVILISSLIAMLLQAMAA, GGFLWVITELAIMATDIAEII, MPLIVGIIITTADVLILLLLM, AVVATLVLVILLVFAYEVILA, MLYLSLGIVGATVMPHDLFLG, LTMAFIVNSLLLILGAALFFG, IVGAIASPMLSMLFAVALLAS, LMSVTPVLIFAIYYHGNEAKI, LLTFSQVFLSIALPFAVIPLV, and FISGVLIILNLYLIAQTLGFV.

This sequence belongs to the NRAMP family.

The protein resides in the cell membrane. H(+)-stimulated, divalent metal cation uptake system. The polypeptide is Divalent metal cation transporter MntH (Lacticaseibacillus casei (strain BL23) (Lactobacillus casei)).